A 782-amino-acid chain; its full sequence is Protein phosphatase 1 regulatory subunit 12C (782 aa).

Low complexity-rich tracts occupy residues 1–19 (MSGE…AAAA) and 77–88 (DPGPGSGAASDP). Disordered stretches follow at residues 1–45 (MSGE…GERR) and 77–98 (DPGP…RAVL). Ser2 carries the post-translational modification N-acetylserine. ANK repeat units follow at residues 104–133 (DGIS…TVNQ), 137–166 (EGWT…NIAA), 230–259 (TGAS…DTEL), and 263–292 (DGWT…GMDS). Residues 301–332 (CDLADEDVMNLLEELAQKQEDLRNQKEGSQGR) are a coiled coil. Positions 321 to 685 (DLRNQKEGSQ…HEEPDGGFRK (365 aa)) are disordered. Positions 332-341 (RGQESQVPSS) are enriched in polar residues. Basic and acidic residues predominate over residues 353-369 (SSREKISLQDLSKERRP). A compositionally biased stretch (low complexity) spans 401–413 (VSSPVSSNPKSPV). Ser403, Ser411, Ser431, Ser454, and Ser509 each carry phosphoserine. The segment covering 451–465 (RSASSSLLEKASTQA) has biased composition (polar residues). The segment covering 537 to 546 (VRDEESESQR) has biased composition (basic and acidic residues). Residues 547–557 (KARSRLMRQSR) show a composition bias toward basic residues. The residue at position 560 (Thr560) is a Phosphothreonine. Ser647 bears the Phosphoserine mark. A compositionally biased stretch (basic and acidic residues) spans 664 to 685 (SQRDLVLESKQEHEEPDGGFRK). Positions 681 to 782 (GGFRKMYTEL…LIRVISKLSK (102 aa)) form a coiled coil.

As to quaternary structure, PP1 comprises a catalytic subunit, PPP1CA, PPP1CB or PPP1CC, and one or several targeting or regulatory subunits. PPP1R12C mediates binding to myosin. Interacts via its N-terminus with PPP1CB. Interacts with IL16. Interacts with the coiled-coil domain of MPRIP. Interacts with NOD2. Post-translationally, phosphorylation at Thr-560 is essential for its interaction with PPP1CB.

It is found in the cytoplasm. It localises to the cytoskeleton. The protein localises to the stress fiber. Its function is as follows. Regulates myosin phosphatase activity. This Mus musculus (Mouse) protein is Protein phosphatase 1 regulatory subunit 12C.